Here is a 380-residue protein sequence, read N- to C-terminus: Crotonobetainyl-CoA reductase (380 aa).

This sequence belongs to the acyl-CoA dehydrogenase family. As to quaternary structure, homotetramer. It depends on FAD as a cofactor.

Its subcellular location is the cytoplasm. The enzyme catalyses 4-(trimethylamino)butanoyl-CoA + oxidized [electron-transfer flavoprotein] + H(+) = crotonobetainyl-CoA + reduced [electron-transfer flavoprotein]. It participates in amine and polyamine metabolism; carnitine metabolism. Its function is as follows. Catalyzes the reduction of crotonobetainyl-CoA to gamma-butyrobetainyl-CoA. In Proteus sp. (strain LE138), this protein is Crotonobetainyl-CoA reductase.